The chain runs to 363 residues: GDSL esterase/lipase At1g29670 (363 aa).

A signal peptide spans 1–24 (MESYLTKWCVVLVLLCFGFSVVKA). Ser-39 acts as the Nucleophile in catalysis. Catalysis depends on residues Asp-327 and His-330.

It belongs to the 'GDSL' lipolytic enzyme family.

The protein resides in the secreted. The sequence is that of GDSL esterase/lipase At1g29670 from Arabidopsis thaliana (Mouse-ear cress).